The primary structure comprises 173 residues: uncharacterized protein (173 aa).

The 170-residue stretch at 4–173 folds into the N-acetyltransferase domain; sequence VKIVQVSEKD…TDFLLKKALV (170 aa). Acetyl-CoA-binding positions include 97–99, 106–110, and 136–138; these read IYL, RGLGK, and NEN.

This is an uncharacterized protein from Lactobacillus delbrueckii subsp. lactis.